The chain runs to 168 residues: Fusion protein P6 (168 aa).

4 helical membrane passes run 29 to 49, 52 to 72, 94 to 114, and 143 to 163; these read IWPL…AGFF, AGFT…TPTL, FQSL…ALIA, and ALPG…LWPS.

In terms of assembly, interacts with P3.

It is found in the virion membrane. In terms of biological role, mediates the fusion with the host outer membrane during virus entry into the host cell. This chain is Fusion protein P6 (P6), found in Pseudomonas savastanoi pv. phaseolicola (Pseudomonas syringae pv. phaseolicola).